Here is a 287-residue protein sequence, read N- to C-terminus: Thiazole synthase (287 aa).

The active-site Schiff-base intermediate with DXP is lysine 111. 1-deoxy-D-xylulose 5-phosphate-binding positions include glycine 172, 203–204, and 225–226; these read AG and NT. Residues 268-287 form a disordered region; it reads PQEGVISTRPYGSQADEIGS.

It belongs to the ThiG family. In terms of assembly, homotetramer. Forms heterodimers with either ThiH or ThiS.

The protein localises to the cytoplasm. It catalyses the reaction [ThiS sulfur-carrier protein]-C-terminal-Gly-aminoethanethioate + 2-iminoacetate + 1-deoxy-D-xylulose 5-phosphate = [ThiS sulfur-carrier protein]-C-terminal Gly-Gly + 2-[(2R,5Z)-2-carboxy-4-methylthiazol-5(2H)-ylidene]ethyl phosphate + 2 H2O + H(+). It functions in the pathway cofactor biosynthesis; thiamine diphosphate biosynthesis. Catalyzes the rearrangement of 1-deoxy-D-xylulose 5-phosphate (DXP) to produce the thiazole phosphate moiety of thiamine. Sulfur is provided by the thiocarboxylate moiety of the carrier protein ThiS. In vitro, sulfur can be provided by H(2)S. This Rhodopirellula baltica (strain DSM 10527 / NCIMB 13988 / SH1) protein is Thiazole synthase.